We begin with the raw amino-acid sequence, 405 residues long: MIMQDEIQPYDLPDELGHFGPYGGIFVAETLMEPLEELKAAYHRYLKDPEFLAELDHDLNHYVGRPSPIYHAERLSRELGGAQIFFKREDLNHTGAHKVNNTVGQALLAKRMGKRRVIAETGAGQHGVATATVAARLGMECVVYMGAVDVQRQALNVFRMKLLGATVIAVDSGSRTLKDALNEAMRDWVTNVDDTFYIIGTVAGPHPYPAMVRDFQAVIGREARRQMLEMTGRLPDALVACVGGGSNAIGLFHPFVDDREVAMYGVEAAGDGIETGRHSAPLSAGRPGVLHGNRTYLMEDEDGEIIETHSISAGLDYPGVGPEHAWLKDCGRASYVSATDAEALEAFHILTRSEGIIPALESSHAVAYALKLAPTLSSDKIVLVNLSGRGDKDIHTIATREGIVL.

Residue lysine 98 is modified to N6-(pyridoxal phosphate)lysine.

The protein belongs to the TrpB family. Tetramer of two alpha and two beta chains. Requires pyridoxal 5'-phosphate as cofactor.

The catalysed reaction is (1S,2R)-1-C-(indol-3-yl)glycerol 3-phosphate + L-serine = D-glyceraldehyde 3-phosphate + L-tryptophan + H2O. The protein operates within amino-acid biosynthesis; L-tryptophan biosynthesis; L-tryptophan from chorismate: step 5/5. Functionally, the beta subunit is responsible for the synthesis of L-tryptophan from indole and L-serine. The chain is Tryptophan synthase beta chain from Methylococcus capsulatus (strain ATCC 33009 / NCIMB 11132 / Bath).